A 359-amino-acid polypeptide reads, in one-letter code: Alanine racemase, biosynthetic (359 aa).

The active-site Proton acceptor; specific for D-alanine is Lys-34. N6-(pyridoxal phosphate)lysine is present on Lys-34. Position 129 (Arg-129) interacts with substrate. The active-site Proton acceptor; specific for L-alanine is Tyr-255. Met-303 contributes to the substrate binding site.

The protein belongs to the alanine racemase family. Pyridoxal 5'-phosphate is required as a cofactor.

The catalysed reaction is L-alanine = D-alanine. It functions in the pathway amino-acid biosynthesis; D-alanine biosynthesis; D-alanine from L-alanine: step 1/1. The protein operates within cell wall biogenesis; peptidoglycan biosynthesis. In terms of biological role, catalyzes the interconversion of L-alanine and D-alanine. Provides the D-alanine required for cell wall biosynthesis. This Escherichia coli O6:H1 (strain CFT073 / ATCC 700928 / UPEC) protein is Alanine racemase, biosynthetic (alr).